Reading from the N-terminus, the 541-residue chain is Chaperonin GroEL 2 (541 aa).

ATP contacts are provided by residues 29-32, 86-90, Gly413, and Asp492; these read TLGP and DGTTT.

This sequence belongs to the chaperonin (HSP60) family. Forms a cylinder of 14 subunits composed of two heptameric rings stacked back-to-back. Interacts with the co-chaperonin GroES.

The protein resides in the cytoplasm. The enzyme catalyses ATP + H2O + a folded polypeptide = ADP + phosphate + an unfolded polypeptide.. Functionally, together with its co-chaperonin GroES, plays an essential role in assisting protein folding. The GroEL-GroES system forms a nano-cage that allows encapsulation of the non-native substrate proteins and provides a physical environment optimized to promote and accelerate protein folding. This chain is Chaperonin GroEL 2, found in Nocardia farcinica (strain IFM 10152).